The primary structure comprises 91 residues: Potassium channel toxin MeuTXK-beta-2 (91 aa).

The N-terminal stretch at 1-19 (MQRNLVVLLFLGMVALSSC) is a signal peptide. Positions 54–91 (QFGCSAYQGYCDDHCQDIEKKEGFCHGFKCKCGIPMGF) constitute a BetaSPN-type CS-alpha/beta domain. Cystine bridges form between C57/C78, C64/C83, and C68/C85.

It belongs to the long chain scorpion toxin family. Class 1 subfamily. Expressed by the venom gland.

The protein resides in the secreted. Functionally, has a low affinity binding to potassium channels of rat brain synaptosomes. Displays weak antibacterial activity against Stenotrophomonas sp. Strongly inhibits the development of the Plasmodium berghei ookinetes. Displays slight hemolytic effect on mouse erythrocytes. Induces cytolysis on Xenopus oocytes at high concentrations. Is not toxic towards mice and towards the insect Tenebrio molitor. In Mesobuthus eupeus (Lesser Asian scorpion), this protein is Potassium channel toxin MeuTXK-beta-2.